Consider the following 490-residue polypeptide: Betaine aldehyde dehydrogenase (490 aa).

3 residues coordinate K(+): Thr26, Ile27, and Asp93. NAD(+) is bound at residue 150-152; it reads GAW. The active-site Charge relay system is Lys162. NAD(+) is bound at residue 176–179; that stretch reads KPSE. K(+) is bound at residue Val180. 230-233 lines the NAD(+) pocket; that stretch reads GVAS. Leu246 provides a ligand contact to K(+). Glu252 functions as the Proton acceptor in the catalytic mechanism. Residues Gly254, Cys286, and Glu387 each contribute to the NAD(+) site. Catalysis depends on Cys286, which acts as the Nucleophile. Cys286 carries the post-translational modification Cysteine sulfenic acid (-SOH). Residues Lys457 and Gly460 each coordinate K(+). Glu464 (charge relay system) is an active-site residue.

It belongs to the aldehyde dehydrogenase family. Dimer of dimers. K(+) serves as cofactor.

It catalyses the reaction betaine aldehyde + NAD(+) + H2O = glycine betaine + NADH + 2 H(+). Its pathway is amine and polyamine biosynthesis; betaine biosynthesis via choline pathway; betaine from betaine aldehyde: step 1/1. Involved in the biosynthesis of the osmoprotectant glycine betaine. Catalyzes the irreversible oxidation of betaine aldehyde to the corresponding acid. The sequence is that of Betaine aldehyde dehydrogenase from Escherichia coli (strain SMS-3-5 / SECEC).